The primary structure comprises 401 residues: Argininosuccinate synthase (401 aa).

Residues 8 to 16 (AYSGGLDTS) and Ala-35 each bind ATP. 2 residues coordinate L-citrulline: Tyr-86 and Ser-91. Gly-116 contributes to the ATP binding site. Thr-118, Asn-122, and Asp-123 together coordinate L-aspartate. Asn-122 serves as a coordination point for L-citrulline. Residues Arg-126, Ser-175, Ser-184, Glu-260, and Tyr-272 each coordinate L-citrulline.

It belongs to the argininosuccinate synthase family. Type 1 subfamily. Homotetramer.

It is found in the cytoplasm. It catalyses the reaction L-citrulline + L-aspartate + ATP = 2-(N(omega)-L-arginino)succinate + AMP + diphosphate + H(+). The protein operates within amino-acid biosynthesis; L-arginine biosynthesis; L-arginine from L-ornithine and carbamoyl phosphate: step 2/3. This Carboxydothermus hydrogenoformans (strain ATCC BAA-161 / DSM 6008 / Z-2901) protein is Argininosuccinate synthase.